Reading from the N-terminus, the 406-residue chain is S-adenosylmethionine synthase (406 aa).

ATP is bound at residue 140 to 145; it reads GRGSVD.

This sequence belongs to the AdoMet synthase 2 family. Mg(2+) serves as cofactor.

It carries out the reaction L-methionine + ATP + H2O = S-adenosyl-L-methionine + phosphate + diphosphate. Its pathway is amino-acid biosynthesis; S-adenosyl-L-methionine biosynthesis; S-adenosyl-L-methionine from L-methionine: step 1/1. Its function is as follows. Catalyzes the formation of S-adenosylmethionine from methionine and ATP. This Aeropyrum pernix (strain ATCC 700893 / DSM 11879 / JCM 9820 / NBRC 100138 / K1) protein is S-adenosylmethionine synthase (mat).